The primary structure comprises 256 residues: MLLVIDVGNSNIVLGIYDGDSLVRDWRVSTDKSKTTDEYGILVHELFRLAGIDFSRITDIIISSVVPTLTGVLEKLSLQYFDFKPYVVGPGIKTGMSIHYDNPKEVGADRIVNAVAGYEKHHTALIIVDFGTATTFDYVNKRGEYCGGAIAPGLMISMEALFQKASKLPRVEITKPPAIVAKNTVNSMQAGIFYGYVGLVDGIVTRMKGEGKENPKVIATGGLAGLIAPESTTIEEVDEYLTLEGLRILYQRNRES.

An ATP-binding site is contributed by 6–13 (DVGNSNIV). Substrate-binding positions include Y100 and 107–110 (GADR). D109 (proton acceptor) is an active-site residue. Residue D129 coordinates K(+). Position 132 (T132) interacts with ATP. T184 lines the substrate pocket.

This sequence belongs to the type III pantothenate kinase family. As to quaternary structure, homodimer. It depends on NH4(+) as a cofactor. K(+) serves as cofactor.

The protein localises to the cytoplasm. The catalysed reaction is (R)-pantothenate + ATP = (R)-4'-phosphopantothenate + ADP + H(+). It functions in the pathway cofactor biosynthesis; coenzyme A biosynthesis; CoA from (R)-pantothenate: step 1/5. In terms of biological role, catalyzes the phosphorylation of pantothenate (Pan), the first step in CoA biosynthesis. This Geotalea daltonii (strain DSM 22248 / JCM 15807 / FRC-32) (Geobacter daltonii) protein is Type III pantothenate kinase.